A 1373-amino-acid chain; its full sequence is Disease resistance protein RRS1 (1373 aa).

The TIR domain occupies 5 to 146; that stretch reads EKDEEFVCIS…EIVRDVYETH (142 aa). One can recognise an NB-ARC domain in the interval 170–421; the sequence is IGIRCVGIWG…LLEGCGFFPH (252 aa). 179–186 contacts ATP; sequence GMPGIGKT. 9 LRR repeats span residues 498–522, 535–553, 554–575, 577–598, 621–646, 665–688, 742–766, 768–793, and 831–854; these read SEEI…AFKN, NPEV…HSLP, NELR…NFDP, HLVE…TKNL, AENL…RLLR, PPNI…TVKP, LPNM…SIQG, PRFL…SLEI, and PRNL…PLSL. Residues 988–1005 carry the Nuclear localization signal motif; it reads RNFHCWAPGKVVPKVRKD. The WRKY DNA-binding region spans 1204–1272; the sequence is IPAIDEGDLW…YLSEHNHPRP (69 aa). The tract at residues 1300–1323 is disordered; that stretch reads RVFQNKDEPNKPHLPSSSTPPGNA.

In terms of assembly, interacts with PopP2, a R.solanacearum type III effector.

It is found in the nucleus. Its function is as follows. Transcription factor. Interacts specifically with the W box (5'-(T)TGAC[CT]-3'), a frequently occurring elicitor-responsive cis-acting element. Also acts as a disease resistance protein involved in resistance to fungal and bacterial pathogens, including R.solanacearum, P.syringae pv. tomato and C.higginsianum. This Arabidopsis thaliana (Mouse-ear cress) protein is Disease resistance protein RRS1.